Reading from the N-terminus, the 325-residue chain is MAAMTKALPRRLVGLASLRAVSTSSMDTLPKQVKIVEVGPRDGLQNEKNIVSTPVKIKLIDMLSEAGLSVIEATSFVSPKWVPQMADHAEVLKGIQKFPGITYPVLIPNLKGFEAAVAAGAKEVSIFGAASELFTKKNVNCSIEESFQRFDAILKAAQSANISVRGYVSCVLGCPYEGKISPAKVAEVTKKFYSMGCYEISLGDTIGVGTPGIMKDMLSAVMQEVPPAALAVHCHDTYGQALANTLMALQMGVSVVDSSVAGLGGCPYAQGASGNLATEDLVYMLEGLGIHTGVNLQKLLEAGNFICQALNRKTSSKVAQATCKL.

A mitochondrion-targeting transit peptide spans 1 to 27; that stretch reads MAAMTKALPRRLVGLASLRAVSTSSMD. Residues 33–300 form the Pyruvate carboxyltransferase domain; it reads VKIVEVGPRD…HTGVNLQKLL (268 aa). Substrate is bound at residue R41. Residue D42 participates in a divalent metal cation binding. K48 carries the post-translational modification N6-acetyllysine; alternate. K48 carries the N6-succinyllysine; alternate modification. The residue at position 111 (K111) is an N6-acetyllysine. 2 positions are modified to N6-acetyllysine; alternate: K137 and K179. N6-succinyllysine; alternate occurs at positions 137 and 179. A divalent metal cation-binding residues include H233 and H235. C266 is an active-site residue. N275 is a binding site for a divalent metal cation. The Microbody targeting signal signature appears at 323–325; it reads CKL. K324 is subject to N6-acetyllysine.

It belongs to the HMG-CoA lyase family. In terms of assembly, homodimer; disulfide-linked. Can also form homotetramers.

The protein localises to the mitochondrion matrix. It localises to the peroxisome. The enzyme catalyses (3S)-3-hydroxy-3-methylglutaryl-CoA = acetoacetate + acetyl-CoA. It participates in metabolic intermediate metabolism; (S)-3-hydroxy-3-methylglutaryl-CoA degradation; acetoacetate from (S)-3-hydroxy-3-methylglutaryl-CoA: step 1/1. In terms of biological role, mitochondrial 3-hydroxy-3-methylglutaryl-CoA lyase that catalyzes a cation-dependent cleavage of (S)-3-hydroxy-3-methylglutaryl-CoA into acetyl-CoA and acetoacetate, a key step in ketogenesis. Terminal step in leucine catabolism. Ketone bodies (beta-hydroxybutyrate, acetoacetate and acetone) are essential as an alternative source of energy to glucose, as lipid precursors and as regulators of metabolism. The sequence is that of Hydroxymethylglutaryl-CoA lyase, mitochondrial (HMGCL) from Macaca fascicularis (Crab-eating macaque).